Consider the following 525-residue polypeptide: Probable histidine ammonia-lyase (525 aa).

A cross-link (5-imidazolinone (Ala-Gly)) is located at residues 145–147 (ASG). Serine 146 carries the 2,3-didehydroalanine (Ser) modification.

This sequence belongs to the PAL/histidase family. Contains an active site 4-methylidene-imidazol-5-one (MIO), which is formed autocatalytically by cyclization and dehydration of residues Ala-Ser-Gly.

It localises to the cytoplasm. It catalyses the reaction L-histidine = trans-urocanate + NH4(+). The protein operates within amino-acid degradation; L-histidine degradation into L-glutamate; N-formimidoyl-L-glutamate from L-histidine: step 1/3. The sequence is that of Probable histidine ammonia-lyase from Halobacterium salinarum (strain ATCC 29341 / DSM 671 / R1).